We begin with the raw amino-acid sequence, 229 residues long: Flagellar L-ring protein (229 aa).

The signal sequence occupies residues Met-1–Gly-25. Cys-26 carries the N-palmitoyl cysteine lipid modification. Cys-26 carries S-diacylglycerol cysteine lipidation.

This sequence belongs to the FlgH family. The basal body constitutes a major portion of the flagellar organelle and consists of four rings (L,P,S, and M) mounted on a central rod.

The protein resides in the cell outer membrane. It is found in the bacterial flagellum basal body. Functionally, assembles around the rod to form the L-ring and probably protects the motor/basal body from shearing forces during rotation. This Burkholderia multivorans (strain ATCC 17616 / 249) protein is Flagellar L-ring protein.